Here is a 2293-residue protein sequence, read N- to C-terminus: Protein Ycf2 (2293 aa).

1642 to 1649 is a binding site for ATP; sequence GSIGTGRS.

Belongs to the Ycf2 family.

Its subcellular location is the plastid. The protein localises to the chloroplast stroma. Probable ATPase of unknown function. Its presence in a non-photosynthetic plant (Epifagus virginiana) and experiments in tobacco indicate that it has an essential function which is probably not related to photosynthesis. In Platanus occidentalis (Sycamore), this protein is Protein Ycf2.